We begin with the raw amino-acid sequence, 814 residues long: Protein kinase C-binding protein NELL2 (814 aa).

Positions 1 to 19 (MEFILGIFCVIFCLRAGAG) are cleaved as a signal peptide. N-linked (GlcNAc...) asparagine glycosylation is found at asparagine 51, asparagine 223, and asparagine 296. The Laminin G-like domain maps to 53–226 (SKAFLFQDTS…SQCPDLNRTC (174 aa)). Positions 270–329 (RSCTVKGNIYRELESWMDGCKKCTCTNGTAQCETLTCSVPNCLSGFAPAYVPGKCCKECQ) constitute a VWFC 1 domain. An EGF-like 1 domain is found at 395-437 (GHDFCSEGHNCVEYSICKNLNDKAVCICRDGFRALREDSAYCE). Disulfide bonds link cysteine 399–cysteine 411, cysteine 405–cysteine 420, and cysteine 422–cysteine 436. Ca(2+) contacts are provided by aspartate 438, isoleucine 439, and glutamate 441. The EGF-like 2; calcium-binding domain maps to 438–479 (DIDECTEGRHYCRENTVCVNTPGSFMCVCQTGYLKIDDYSCT). Cystine bridges form between cysteine 442-cysteine 455, cysteine 449-cysteine 464, cysteine 466-cysteine 478, cysteine 484-cysteine 497, cysteine 491-cysteine 506, cysteine 508-cysteine 519, cysteine 523-cysteine 533, cysteine 527-cysteine 539, and cysteine 541-cysteine 550. Residues asparagine 457, threonine 458, and serine 461 each contribute to the Ca(2+) site. In terms of domain architecture, EGF-like 3; calcium-binding spans 480-520 (EHNECATNQHSCDENAVCYNTVGGHNCVCQPGYTGNGTVCK). An N-linked (GlcNAc...) asparagine glycan is attached at asparagine 515. Positions 521 to 551 (AFCTDGCRNGGTCIAPNICACPQGFTGPSCE) constitute an EGF-like 4 domain. Ca(2+) contacts are provided by aspartate 553, isoleucine 554, and glutamate 556. Residues 553–599 (DIDECTEGFVQCDSRANCINLPGWYHCECRDGYHDNGMFSLSGESCE) enclose the EGF-like 5; calcium-binding domain. 3 disulfides stabilise this stretch: cysteine 557/cysteine 570, cysteine 564/cysteine 579, and cysteine 581/cysteine 598. 3 residues coordinate Ca(2+): asparagine 572, leucine 573, and tryptophan 576. 3 residues coordinate Ca(2+): aspartate 600, isoleucine 601, and glutamate 603. The 36-residue stretch at 600–635 (DIDECATGRHSCSNDTVCFNLDGGFDCRCPHGKNCS) folds into the EGF-like 6; calcium-binding domain. 3 cysteine pairs are disulfide-bonded: cysteine 604-cysteine 617, cysteine 611-cysteine 626, and cysteine 628-cysteine 634. Residue asparagine 613 is glycosylated (N-linked (GlcNAc...) asparagine). Asparagine 619, leucine 620, and glycine 623 together coordinate Ca(2+). An N-linked (GlcNAc...) asparagine glycan is attached at asparagine 633. 2 consecutive VWFC domains span residues 636–691 (GDCT…PECD) and 696–754 (SQCL…PRCI).

In terms of assembly, homotrimer.

It localises to the secreted. May regulate neuronal differentiation, polarization and axon guidance. This chain is Protein kinase C-binding protein NELL2 (nell2), found in Xenopus tropicalis (Western clawed frog).